Reading from the N-terminus, the 156-residue chain is ATP synthase subunit b (156 aa).

The chain crosses the membrane as a helical span at residues 7–29; that stretch reads LLGQAIAFALFVWFCMKYVWPPI.

It belongs to the ATPase B chain family. In terms of assembly, F-type ATPases have 2 components, F(1) - the catalytic core - and F(0) - the membrane proton channel. F(1) has five subunits: alpha(3), beta(3), gamma(1), delta(1), epsilon(1). F(0) has three main subunits: a(1), b(2) and c(10-14). The alpha and beta chains form an alternating ring which encloses part of the gamma chain. F(1) is attached to F(0) by a central stalk formed by the gamma and epsilon chains, while a peripheral stalk is formed by the delta and b chains.

It is found in the cell inner membrane. Functionally, f(1)F(0) ATP synthase produces ATP from ADP in the presence of a proton or sodium gradient. F-type ATPases consist of two structural domains, F(1) containing the extramembraneous catalytic core and F(0) containing the membrane proton channel, linked together by a central stalk and a peripheral stalk. During catalysis, ATP synthesis in the catalytic domain of F(1) is coupled via a rotary mechanism of the central stalk subunits to proton translocation. Component of the F(0) channel, it forms part of the peripheral stalk, linking F(1) to F(0). This chain is ATP synthase subunit b, found in Aliivibrio salmonicida (strain LFI1238) (Vibrio salmonicida (strain LFI1238)).